The following is a 507-amino-acid chain: Glycerol kinase 2 (507 aa).

Residue Thr16 coordinates ADP. Positions 16, 17, and 18 each coordinate ATP. Thr16 contacts sn-glycerol 3-phosphate. Residue Arg20 coordinates ADP. Arg86, Glu87, Tyr138, and Asp248 together coordinate sn-glycerol 3-phosphate. Residues Arg86, Glu87, Tyr138, Asp248, and Gln249 each contribute to the glycerol site. Thr270 and Gly314 together coordinate ADP. Residues Thr270, Gly314, Gln318, and Gly415 each coordinate ATP. Residues Gly415 and Asn419 each coordinate ADP.

The protein belongs to the FGGY kinase family.

It carries out the reaction glycerol + ATP = sn-glycerol 3-phosphate + ADP + H(+). Its pathway is polyol metabolism; glycerol degradation via glycerol kinase pathway; sn-glycerol 3-phosphate from glycerol: step 1/1. Its activity is regulated as follows. Inhibited by fructose 1,6-bisphosphate (FBP). Key enzyme in the regulation of glycerol uptake and metabolism. Catalyzes the phosphorylation of glycerol to yield sn-glycerol 3-phosphate. The protein is Glycerol kinase 2 of Streptomyces avermitilis (strain ATCC 31267 / DSM 46492 / JCM 5070 / NBRC 14893 / NCIMB 12804 / NRRL 8165 / MA-4680).